The sequence spans 451 residues: Probable asparagine--tRNA ligase, cytoplasmic (451 aa).

It belongs to the class-II aminoacyl-tRNA synthetase family.

It localises to the cytoplasm. It catalyses the reaction tRNA(Asn) + L-asparagine + ATP = L-asparaginyl-tRNA(Asn) + AMP + diphosphate + H(+). This Encephalitozoon cuniculi (strain GB-M1) (Microsporidian parasite) protein is Probable asparagine--tRNA ligase, cytoplasmic.